The primary structure comprises 57 residues: Kunitz-type serine protease inhibitor (57 aa).

In terms of domain architecture, BPTI/Kunitz inhibitor spans C5–C55. 3 cysteine pairs are disulfide-bonded: C5–C55, C14–C38, and C30–C51.

It belongs to the venom Kunitz-type family. In terms of tissue distribution, expressed by the venom gland.

It is found in the secreted. Its function is as follows. Serine protease inhibitor that inhibits chymotrypsin. Also interacts with vasopressin V2 receptor (V2R/AVPR2). Inhibits vasopressin binding human V2R in the nanomolar range (Ki=7.87 nM), and also moderately inhibits vasopressin-induced cAMP production (IC(50)=208 nM). In vivo, intraperitoneal injection of this protein into rats increases diuresis by 1.6-fold, without any loss of electrolytes. This Naja naja (Indian cobra) protein is Kunitz-type serine protease inhibitor.